We begin with the raw amino-acid sequence, 208 residues long: Interleukin-6 (208 aa).

The N-terminal stretch at 1–29 is a signal peptide; the sequence is MNSRFTSAFTPFAVSLGLLLVMTSAFPTP. Asn38 carries N-linked (GlcNAc...) asparagine glycosylation. A disulfide bridge links Cys72 with Cys78. Residue Ser81 is modified to Phosphoserine. The cysteines at positions 101 and 111 are disulfide-linked.

This sequence belongs to the IL-6 superfamily. In terms of assembly, component of a hexamer of two molecules each of IL6, IL6R and IL6ST; first binds to IL6R to associate with the signaling subunit IL6ST. Interacts with IL6R (via the N-terminal ectodomain); this interaction may be affected by IL6R-binding with SORL1, hence decreasing IL6 cis signaling. Interacts with SORL1 (via the N-terminal ectodomain); this interaction leads to IL6 internalization and lysosomal degradation. May form a trimeric complex with the soluble SORL1 ectodomain and soluble IL6R receptor; this interaction might stabilize circulating IL6, hence promoting IL6 trans signaling.

The protein localises to the secreted. Its function is as follows. Cytokine with a wide variety of biological functions in immunity, tissue regeneration, and metabolism. Binds to IL6R, then the complex associates to the signaling subunit IL6ST/gp130 to trigger the intracellular IL6-signaling pathway. The interaction with the membrane-bound IL6R and IL6ST stimulates 'classic signaling', whereas the binding of IL6 and soluble IL6R to IL6ST stimulates 'trans-signaling'. Alternatively, 'cluster signaling' occurs when membrane-bound IL6:IL6R complexes on transmitter cells activate IL6ST receptors on neighboring receiver cells. In terms of biological role, IL6 is a potent inducer of the acute phase response. Rapid production of IL6 contributes to host defense during infection and tissue injury, but excessive IL6 synthesis is involved in disease pathology. In the innate immune response, is synthesized by myeloid cells, such as macrophages and dendritic cells, upon recognition of pathogens through toll-like receptors (TLRs) at the site of infection or tissue injury. In the adaptive immune response, is required for the differentiation of B cells into immunoglobulin-secreting cells. Plays a major role in the differentiation of CD4(+) T cell subsets. Essential factor for the development of T follicular helper (Tfh) cells that are required for the induction of germinal-center formation. Required to drive naive CD4(+) T cells to the Th17 lineage. Also required for proliferation of myeloma cells and the survival of plasmablast cells. Acts as an essential factor in bone homeostasis and on vessels directly or indirectly by induction of VEGF, resulting in increased angiogenesis activity and vascular permeability. Induces, through 'trans-signaling' and synergistically with IL1B and TNF, the production of VEGF. Involved in metabolic controls, is discharged into the bloodstream after muscle contraction increasing lipolysis and improving insulin resistance. 'Trans-signaling' in central nervous system also regulates energy and glucose homeostasis. Mediates, through GLP-1, crosstalk between insulin-sensitive tissues, intestinal L cells and pancreatic islets to adapt to changes in insulin demand. Also acts as a myokine. Plays a protective role during liver injury, being required for maintenance of tissue regeneration. Also has a pivotal role in iron metabolism by regulating HAMP/hepcidin expression upon inflammation or bacterial infection. Through activation of IL6ST-YAP-NOTCH pathway, induces inflammation-induced epithelial regeneration. In Bubalus bubalis (Domestic water buffalo), this protein is Interleukin-6 (IL6).